Reading from the N-terminus, the 546-residue chain is Major facilitator superfamily transporter MPN_077 (546 aa).

The next 12 membrane-spanning stretches (helical) occupy residues 2–22, 62–82, 88–108, 179–199, 220–240, 248–268, 305–325, 344–364, 377–397, 401–421, 442–462, and 485–505; these read WGLV…IDFI, WTIT…VVKF, VMIM…GSPL, AFFI…IAYA, FWGF…PGVG, VWVV…FAWF, LLAI…QTWF, PILL…LSPF, FIFT…ATLG, VVGF…GWSL, IIFG…DIIT, and IAAI…IIYL.

This sequence belongs to the major facilitator superfamily.

Its subcellular location is the cell membrane. The chain is Major facilitator superfamily transporter MPN_077 from Mycoplasma pneumoniae (strain ATCC 29342 / M129 / Subtype 1) (Mycoplasmoides pneumoniae).